A 714-amino-acid polypeptide reads, in one-letter code: Polyribonucleotide nucleotidyltransferase (714 aa).

Mg(2+)-binding residues include Asp496 and Asp502. One can recognise a KH domain in the interval 562–621; sequence PRLLTIKIDPDLIGMVIGPGGKTIKGITEQTRAKVDIADDGTVTIASSESENAEKAKRLI. One can recognise an S1 motif domain in the interval 631-699; that stretch reads GDVYFGKVTR…NKGRINLTRL (69 aa).

It belongs to the polyribonucleotide nucleotidyltransferase family. Mg(2+) serves as cofactor.

It is found in the cytoplasm. The catalysed reaction is RNA(n+1) + phosphate = RNA(n) + a ribonucleoside 5'-diphosphate. In terms of biological role, involved in mRNA degradation. Catalyzes the phosphorolysis of single-stranded polyribonucleotides processively in the 3'- to 5'-direction. The protein is Polyribonucleotide nucleotidyltransferase of Picosynechococcus sp. (strain ATCC 27264 / PCC 7002 / PR-6) (Agmenellum quadruplicatum).